A 394-amino-acid polypeptide reads, in one-letter code: MSKEKFERNKPHVNVGTIGHVDHGKTTLTAAITNVLAKHFGGKAFAFDQIDKAPEERERGITINTSHVEYDTATRHYAHVDCPGHADYVKNMITGAAQMDGAILVVAATDGPMPQTREHILLGRQVGVPYIIVFMNKCDMVDDEELLELVEMEVRELLSEYDFPGDDLPVVRGSALKALEGEAQWEEKILELAGHLDTYIPEPERAIDLPFLMPIEDVFSIAGRGTVVTGRVERGIVKVGEEVEIVGIKDTTKTTCTGVEMFRKLLDEGRAGENIGALLRGVKREDVERGQVLAKPGTIKPHTKFESEVYVLSKEEGGRHTPFFKGYRPQFYFRTTDVTGTIELPEGVEMVMPGDNIKMVVTLIAPIAMDDGLRFAIREGGRTVGAGVVAKVIA.

The tr-type G domain maps to 10 to 204 (KPHVNVGTIG…HLDTYIPEPE (195 aa)). The segment at 19–26 (GHVDHGKT) is G1. 19 to 26 (GHVDHGKT) is a GTP binding site. Thr26 contributes to the Mg(2+) binding site. A G2 region spans residues 60-64 (GITIN). Residues 81–84 (DCPG) form a G3 region. Residues 81–85 (DCPGH) and 136–139 (NKCD) contribute to the GTP site. Positions 136-139 (NKCD) are G4. Residues 174-176 (SAL) are G5.

Belongs to the TRAFAC class translation factor GTPase superfamily. Classic translation factor GTPase family. EF-Tu/EF-1A subfamily. As to quaternary structure, monomer.

Its subcellular location is the cytoplasm. The enzyme catalyses GTP + H2O = GDP + phosphate + H(+). In terms of biological role, GTP hydrolase that promotes the GTP-dependent binding of aminoacyl-tRNA to the A-site of ribosomes during protein biosynthesis. The chain is Elongation factor Tu from Aeromonas hydrophila subsp. hydrophila (strain ATCC 7966 / DSM 30187 / BCRC 13018 / CCUG 14551 / JCM 1027 / KCTC 2358 / NCIMB 9240 / NCTC 8049).